An 84-amino-acid chain; its full sequence is MHGTCLSGLYPEPFTHNSHDYPHFNIYISFGGPKYCITALNTYVIPLLHHILTTQFIHTYFNIPTKSPPKSPKHKNYLSFNFTK.

The protein belongs to the UPF0320 family.

The chain is UPF0320 protein YNR077C from Saccharomyces cerevisiae (strain ATCC 204508 / S288c) (Baker's yeast).